Here is a 327-residue protein sequence, read N- to C-terminus: Glycerol-3-phosphate dehydrogenase [NAD(P)+] (327 aa).

The NADPH site is built by Trp-13, His-33, and Lys-102. Sn-glycerol 3-phosphate-binding residues include Lys-102, Gly-130, and Ser-132. Ala-134 contributes to the NADPH binding site. Positions 185, 238, 248, 249, and 250 each coordinate sn-glycerol 3-phosphate. Catalysis depends on Lys-185, which acts as the Proton acceptor. Arg-249 is an NADPH binding site. An NADPH-binding site is contributed by Glu-275.

This sequence belongs to the NAD-dependent glycerol-3-phosphate dehydrogenase family.

The protein resides in the cytoplasm. It carries out the reaction sn-glycerol 3-phosphate + NAD(+) = dihydroxyacetone phosphate + NADH + H(+). The catalysed reaction is sn-glycerol 3-phosphate + NADP(+) = dihydroxyacetone phosphate + NADPH + H(+). The protein operates within membrane lipid metabolism; glycerophospholipid metabolism. In terms of biological role, catalyzes the reduction of the glycolytic intermediate dihydroxyacetone phosphate (DHAP) to sn-glycerol 3-phosphate (G3P), the key precursor for phospholipid synthesis. The protein is Glycerol-3-phosphate dehydrogenase [NAD(P)+] of Vesicomyosocius okutanii subsp. Calyptogena okutanii (strain HA).